A 100-amino-acid chain; its full sequence is Putative sodium channel toxin Ts26 (100 aa).

The first 22 residues, Met1–Ser22, serve as a signal peptide directing secretion. In terms of domain architecture, LCN-type CS-alpha/beta spans Arg24–Glu92. Disulfide bonds link Cys38/Cys64, Cys50/Cys69, Cys54/Cys71, and Cys65/Cys91.

This sequence belongs to the long (4 C-C) scorpion toxin superfamily. Sodium channel inhibitor family. As to expression, expressed by the venom gland.

Its subcellular location is the secreted. Functionally, putative sodium channel toxin. In Tityus serrulatus (Brazilian scorpion), this protein is Putative sodium channel toxin Ts26.